Reading from the N-terminus, the 239-residue chain is Fatty acid metabolism regulator protein (239 aa).

The HTH gntR-type domain occupies 6-74 (QSPAGFAEEY…HGKPTKVNNF (69 aa)). The segment at residues 34 to 53 (ERELSELIGVTRTTLREVLQ) is a DNA-binding region (H-T-H motif).

Homodimer.

It is found in the cytoplasm. Functionally, multifunctional regulator of fatty acid metabolism. Represses transcription of at least eight genes required for fatty acid transport and beta-oxidation including fadA, fadB, fadD, fadL and fadE. Activates transcription of at least three genes required for unsaturated fatty acid biosynthesis: fabA, fabB and iclR, the gene encoding the transcriptional regulator of the aceBAK operon encoding the glyoxylate shunt enzymes. Binding of FadR is specifically inhibited by long chain fatty acyl-CoA compounds. This chain is Fatty acid metabolism regulator protein, found in Salmonella typhimurium (strain LT2 / SGSC1412 / ATCC 700720).